The sequence spans 284 residues: Nucleotide-binding protein Sputcn32_0712 (284 aa).

8–15 (GRSGSGKS) is an ATP binding site. 56-59 (DVRN) contributes to the GTP binding site.

This sequence belongs to the RapZ-like family.

Its function is as follows. Displays ATPase and GTPase activities. This is Nucleotide-binding protein Sputcn32_0712 from Shewanella putrefaciens (strain CN-32 / ATCC BAA-453).